A 267-amino-acid chain; its full sequence is Diacetylchitobiose deacetylase (267 aa).

Belongs to the PIGL family. Homohexamer.

The protein resides in the cytoplasm. It carries out the reaction N,N'-diacetylchitobiose + H2O = beta-D-glucosaminyl-(1-&gt;4)-N-acetyl-D-glucosamine + acetate. Its pathway is glycan degradation; chitin degradation. Its function is as follows. Deacylates the non-reducing end of diacetylchitobiose (GlcNAc2). Can also use N-acetylglucosamine (GlcNAc) and N-acetylchitotriose (GlcNAc3). Probably involved in chitin degradation. The chain is Diacetylchitobiose deacetylase (dac) from Thermococcus kodakarensis (strain ATCC BAA-918 / JCM 12380 / KOD1) (Pyrococcus kodakaraensis (strain KOD1)).